Here is a 358-residue protein sequence, read N- to C-terminus: MTRLTLALDVMGGDFGPSVTVPAALQALNSNSQLTLLLVGNPDTITPLLAKADFEQRSRLQIIPAQSVIASNARPSQAIRASRGSSMRVALELVKEGRAQACVSAGNTGALMGLAKLLLKPLEGIERPALVTVLPHQQKGKTVVLDLGANVDCDSTMLVQFAIMGSVLAEEVVGIPNPRVALLNIGEEEVKGLDSIRDASAVLKTISSVNYIGYLEANELLTGKTDVLVCDGFTGNVTLKTMEGVVRMFLSLLKSQGEGKKRSWWLLLLKRWLQKSLTRRFSHLNPDQYNGACLLGLRGTVIKSHGAANQRAFAVAIEQAVQAVQRQVPQRIAARLKSVYPAGFELLEDERGKKPNHR.

Belongs to the PlsX family. As to quaternary structure, homodimer. Probably interacts with PlsY.

It is found in the cytoplasm. It carries out the reaction a fatty acyl-[ACP] + phosphate = an acyl phosphate + holo-[ACP]. It functions in the pathway lipid metabolism; phospholipid metabolism. Functionally, catalyzes the reversible formation of acyl-phosphate (acyl-PO(4)) from acyl-[acyl-carrier-protein] (acyl-ACP). This enzyme utilizes acyl-ACP as fatty acyl donor, but not acyl-CoA. The chain is Phosphate acyltransferase from Escherichia fergusonii (strain ATCC 35469 / DSM 13698 / CCUG 18766 / IAM 14443 / JCM 21226 / LMG 7866 / NBRC 102419 / NCTC 12128 / CDC 0568-73).